Reading from the N-terminus, the 855-residue chain is Inactive rhomboid protein 1 (855 aa).

The interval 1-35 (MSEARRDSTSSLQRKKPPWLKLDIPSAAPATAEEP) is disordered. At 1 to 411 (MSEARRDSTS…HRPFFTYWLT (411 aa)) the chain is on the cytoplasmic side. Over residues 25-35 (PSAAPATAEEP) the composition is skewed to low complexity. Phosphoserine is present on residues Ser-76 and Ser-176. 2 positions are modified to phosphothreonine: Thr-180 and Thr-183. At Ser-390 the chain carries Phosphoserine. A helical transmembrane segment spans residues 412–432 (FVHSLVTILAVCIYGIAPVGF). Residues 433–655 (SQHETVDSVL…NPEVPDQFYR (223 aa)) are Lumenal-facing. An N-linked (GlcNAc...) asparagine glycan is attached at Asn-583. The chain crosses the membrane as a helical span at residues 656–676 (LWLSLFLHAGILHCLVSICFQ). The Cytoplasmic portion of the chain corresponds to 677 to 691 (MTVLRDLEKLAGWHR). A helical membrane pass occupies residues 692–712 (IAIIYLLSGVTGNLASAIFLP). Topologically, residues 713 to 714 (YR) are lumenal. Residues 715–735 (AEVGPAGSQFGILACLFVELF) form a helical membrane-spanning segment. At 736-746 (QSWQILARPWR) the chain is on the cytoplasmic side. A helical membrane pass occupies residues 747 to 767 (AFFKLLAVVLFLFTFGLLPWI). The Lumenal portion of the chain corresponds to 768 to 772 (DNFAH). Residues 773–793 (ISGFISGLFLSFAFLPYISFG) form a helical membrane-spanning segment. Over 794–803 (KFDLYRKRCQ) the chain is Cytoplasmic. A helical membrane pass occupies residues 804 to 824 (IIVFQVVFLGLLAGLVVLFYV). The Lumenal portion of the chain corresponds to 825-855 (YPVRCEWCEFLTCIPFTDKFCEKYELDAQLH).

This sequence belongs to the peptidase S54 family. Homodimer, or homooligomer. Interacts with TGFA and HBEGF. Interacts with EGF; may retain EGF in the endoplasmic reticulum and regulates its degradation through the endoplasmic reticulum-associated degradation (ERAD). Interacts (via cytoplasmic N-terminus) with FRMD8/iTAP; this interaction leads to mutual protein stabilization. Interacts with ADAM17/TACE.

It is found in the endoplasmic reticulum membrane. The protein localises to the golgi apparatus membrane. Its function is as follows. Regulates ADAM17 protease, a sheddase of the epidermal growth factor (EGF) receptor ligands and TNF, thereby plays a role in sleep, cell survival, proliferation, migration and inflammation. Does not exhibit any protease activity on its own. This chain is Inactive rhomboid protein 1 (RHBDF1), found in Callithrix jacchus (White-tufted-ear marmoset).